The sequence spans 240 residues: Endonuclease V (240 aa).

2 residues coordinate Mg(2+): D46 and D116.

It belongs to the endonuclease V family. The cofactor is Mg(2+).

It localises to the cytoplasm. The catalysed reaction is Endonucleolytic cleavage at apurinic or apyrimidinic sites to products with a 5'-phosphate.. Functionally, DNA repair enzyme involved in the repair of deaminated bases. Selectively cleaves double-stranded DNA at the second phosphodiester bond 3' to a deoxyinosine leaving behind the intact lesion on the nicked DNA. In Rhodospirillum centenum (strain ATCC 51521 / SW), this protein is Endonuclease V.